We begin with the raw amino-acid sequence, 326 residues long: MHKKRVFSGIQPTGQIHLGNYLGAIKHWVEMQDEYENLFCVVNSHAITLPIDPAFLKSQSYELVKLLLACGIDPKQSGLFIQSEVDEHPALAWLLNCQVSMGEMQRMTQFKDKSLKNPKSVNVGLFNYPILMASDILLYQSDLVPVGEDQKQHLELTRNIAEKFNRDFGNCFKVPEPLIAKVGARVMGLDDPKVKMSKSHQGANHAIFLLDEPDIIVKKIKKAATDSMGVIAFDEKREGIFNLLNIYMLLSNESPENIEERFKNKGYGDFKKELAEVMIQALKPIQERYKEISDDEVKAILNGGAEKARPLARATYQKAKELMGLI.

Residues 11 to 13 and 19 to 20 contribute to the ATP site; these read QPT and GN. A 'HIGH' region motif is present at residues 12 to 20; sequence PTGQIHLGN. Position 135 (aspartate 135) interacts with L-tryptophan. ATP is bound by residues 147–149, valine 186, and 195–199; these read GED and KMSKS. Residues 195–199 carry the 'KMSKS' region motif; that stretch reads KMSKS.

It belongs to the class-I aminoacyl-tRNA synthetase family. In terms of assembly, homodimer.

It is found in the cytoplasm. The enzyme catalyses tRNA(Trp) + L-tryptophan + ATP = L-tryptophyl-tRNA(Trp) + AMP + diphosphate + H(+). Catalyzes the attachment of tryptophan to tRNA(Trp). This is Tryptophan--tRNA ligase from Helicobacter pylori (strain ATCC 700392 / 26695) (Campylobacter pylori).